A 212-amino-acid polypeptide reads, in one-letter code: Adenylate kinase (212 aa).

10-15 (GAGKGT) is an ATP binding site. Residues 30–59 (STGDMFRAAMANQTEMGRLAKSYIDKGELV) are NMP. AMP contacts are provided by residues Thr-31, Arg-36, 57 to 59 (ELV), 86 to 89 (GYPR), and Gln-93. The tract at residues 127–159 (GRIINRKTGETFHKVFNPPVDYKEEDYYQREDD) is LID. Residues Arg-128 and 137–138 (TF) each bind ATP. Residues Arg-156 and Arg-167 each coordinate AMP. Position 195 (Gln-195) interacts with ATP.

The protein belongs to the adenylate kinase family. Monomer.

It localises to the cytoplasm. The enzyme catalyses AMP + ATP = 2 ADP. It participates in purine metabolism; AMP biosynthesis via salvage pathway; AMP from ADP: step 1/1. Functionally, catalyzes the reversible transfer of the terminal phosphate group between ATP and AMP. Plays an important role in cellular energy homeostasis and in adenine nucleotide metabolism. The sequence is that of Adenylate kinase from Streptococcus agalactiae serotype III (strain NEM316).